A 1096-amino-acid chain; its full sequence is Pentatricopeptide repeat-containing protein At5g55840 (1096 aa).

PPR repeat units follow at residues 122–156, 157–191, 192–226, 227–261, 262–296, 297–331, 332–366, 367–401, 402–436, 437–471, 472–506, 507–541, 542–576, 577–607, 612–646, 647–681, 683–717, 718–752, 753–787, 788–822, 823–857, 858–892, 893–927, 928–962, 963–997, 998–1032, and 1033–1068; these read NPSVYDILIRVYLREGMIQDSLEIFRLMGLYGFNP, SVYTCNAILGSVVKSGEDVSVWSFLKEMLKRKICP, DVATFNILINVLCAEGSFEKSSYLMQKMEKSGYAP, TIVTYNTVLHWYCKKGRFKAAIELLDHMKSKGVDA, DVCTYNMLIHDLCRSNRIAKGYLLLRDMRKRMIHP, NEVTYNTLINGFSNEGKVLIASQLLNEMLSFGLSP, NHVTFNALIDGHISEGNFKEALKMFYMMEAKGLTP, SEVSYGVLLDGLCKNAEFDLARGFYMRMKRNGVCV, GRITYTGMIDGLCKNGFLDEAVVLLNEMSKDGIDP, DIVTYSALINGFCKVGRFKTAKEIVCRIYRVGLSP, NGIIYSTLIYNCCRMGCLKEAIRIYEAMILEGHTR, DHFTFNVLVTSLCKAGKVAEAEEFMRCMTSDGILP, NTVSFDCLINGYGNSGEGLKAFSVFDEMTKVGHHP, TFFTYGSLLKGLCKGGHLREAEKFLKSLHAV, DTVMYNTLLTAMCKSGNLAKAVSLFGEMVQRSILP, DSYTYTSLISGLCRKGKTVIAILFAKEAEARGNVL, NKVMYTCFVDGMFKAGQWKAGIYFREQMDNLGHTP, DIVTTNAMIDGYSRMGKIEKTNDLLPEMGNQNGGP, NLTTYNILLHGYSKRKDVSTSFLLYRSIILNGILP, DKLTCHSLVLGICESNMLEIGLKILKAFICRGVEV, DRYTFNMLISKCCANGEINWAFDLVKVMTSLGISL, DKDTCDAMVSVLNRNHRFQESRMVLHEMSKQGISP, ESRKYIGLINGLCRVGDIKTAFVVKEEMIAHKICP, PNVAESAMVRALAKCGKADEATLLLRFMLKMKLVP, TIASFTTLMHLCCKNGNVIEALELRVVMSNCGLKL, DLVSYNVLITGLCAKGDMALAFELYEEMKGDGFLA, and NATTYKALIRGLLARETAFSGADIILKDLLARGFIT.

Belongs to the PPR family. P subfamily.

This chain is Pentatricopeptide repeat-containing protein At5g55840, found in Arabidopsis thaliana (Mouse-ear cress).